Consider the following 413-residue polypeptide: 1-acylglycerol-3-phosphate O-acyltransferase Pnpla3 (413 aa).

The Cytoplasmic segment spans residues 1 to 42; sequence MYDPERRWSLSFAGCGFLGFYHVGATLCLSERAPHLLRDART. Residues 10-179 enclose the PNPLA domain; that stretch reads LSFAGCGFLG…SDNVPVLDAK (170 aa). Positions 14-19 match the GXGXXG motif; the sequence is GCGFLG. The helical; Signal-anchor for type II membrane protein transmembrane segment at 43–63 threads the bilayer; that stretch reads FFGCSAGALHAVTFVCSLPLG. The short motif at 45–49 is the GXSXG element; it reads GCSAG. The active-site Nucleophile is the serine 47. Over 64–413 the chain is Lumenal; the sequence is RIMEILMDLV…HKPQGNSAGL (350 aa). Aspartate 166 serves as the catalytic Proton acceptor. A DGA/G motif is present at residues 166–168; it reads DGG. 2 N-linked (GlcNAc...) asparagine glycosylation sites follow: asparagine 206 and asparagine 209. The tract at residues 389 to 413 is disordered; sequence KDDHRMLKHGHHPSPHKPQGNSAGL. The segment covering 394–403 has biased composition (basic residues); that stretch reads MLKHGHHPSP.

Restricted to adipose tissue. Expressed in inguinal and epididymal white adipose tissues and in interscapular brown adipose tissue. Also expressed in liver in response to high-sucrose diet.

Its subcellular location is the membrane. The protein localises to the lipid droplet. It catalyses the reaction a 1-acyl-sn-glycero-3-phosphate + an acyl-CoA = a 1,2-diacyl-sn-glycero-3-phosphate + CoA. It carries out the reaction a triacylglycerol + H2O = a diacylglycerol + a fatty acid + H(+). The enzyme catalyses a 1-acylglycerol + a 1,3-diacylglycerol = a triacylglycerol + glycerol. The catalysed reaction is a 1-acylglycerol + a 1,2-diacylglycerol = a triacylglycerol + glycerol. It catalyses the reaction 2 a 1-acylglycerol = a 1,2-diacylglycerol + glycerol. It carries out the reaction 1-(9Z-octadecenoyl)-sn-glycero-3-phosphate + (9Z)-octadecenoyl-CoA = 1,2-di-(9Z-octadecenoyl)-sn-glycero-3-phosphate + CoA. The enzyme catalyses 1-(9Z-octadecenoyl)-sn-glycero-3-phosphate + hexadecanoyl-CoA = 1-(9Z)-octadecenoyl-2-hexadecanoyl-sn-glycero-3-phosphate + CoA. The catalysed reaction is 1-(9Z-octadecenoyl)-sn-glycero-3-phosphate + (9Z,12Z)-octadecadienoyl-CoA = 1-(9Z)-octadecenoyl-2-(9Z,12Z)-octadecadienoyl-sn-glycero-3-phosphate + CoA. It catalyses the reaction 1-(9Z-octadecenoyl)-sn-glycero-3-phosphate + (5Z,8Z,11Z,14Z)-eicosatetraenoyl-CoA = 1-(9Z)-octadecenoyl-2-(5Z,8Z,11Z,14Z)-eicosatetraenoyl-sn-glycero-3-phosphate + CoA. It carries out the reaction 2 1-(9Z-octadecenoyl)-glycerol = 1,2-di-(9Z-octadecenoyl)-glycerol + glycerol. The enzyme catalyses 1-(9Z-octadecenoyl)-glycerol + 1,2-di-(9Z-octadecenoyl)-glycerol = 1,2,3-tri-(9Z-octadecenoyl)-glycerol + glycerol. The catalysed reaction is 1-(9Z-octadecenoyl)-glycerol + 1,3-di-(9Z-octadecenoyl)-glycerol = 1,2,3-tri-(9Z-octadecenoyl)-glycerol + glycerol. It catalyses the reaction 1,2,3-tri-(9Z-octadecenoyl)-glycerol + H2O = 1,3-di-(9Z-octadecenoyl)-glycerol + (9Z)-octadecenoate + H(+). It carries out the reaction a 1,2-diacyl-sn-glycero-3-phosphocholine + H2O = a 1-acyl-sn-glycero-3-phosphocholine + a fatty acid + H(+). It participates in phospholipid metabolism. Its pathway is glycerolipid metabolism. Functionally, specifically catalyzes coenzyme A (CoA)-dependent acylation of 1-acyl-sn-glycerol 3-phosphate (2-lysophosphatidic acid/LPA) to generate phosphatidic acid (PA), an important metabolic intermediate and precursor for both triglycerides and glycerophospholipids. Does not esterify other lysophospholipids. Acyl donors are long chain (at least C16) fatty acyl-CoAs: arachidonoyl-CoA, linoleoyl-CoA, oleoyl-CoA and at a lesser extent palmitoyl-CoA. Additionally possesses low triacylglycerol lipase and CoA-independent acylglycerol transacylase activities and thus may play a role in acyl-chain remodeling of triglycerides. In vitro may express hydrolytic activity against glycerolipids triacylglycerol, diacylglycerol and monoacylglycerol, with a strong preference for oleic acid as the acyl moiety. However, the triacylglycerol hydrolase activity is controversial and may be very low. Possesses phospholipase A2 activity. This is 1-acylglycerol-3-phosphate O-acyltransferase Pnpla3 from Mus musculus (Mouse).